Here is a 378-residue protein sequence, read N- to C-terminus: Bifunctional enzyme IspD/IspF (378 aa).

Residues Met-1–Arg-222 are 2-C-methyl-D-erythritol 4-phosphate cytidylyltransferase. Residues Arg-222–Gly-378 are 2-C-methyl-D-erythritol 2,4-cyclodiphosphate synthase. A divalent metal cation is bound by residues Asp-228 and His-230. 4-CDP-2-C-methyl-D-erythritol 2-phosphate-binding positions include Asp-228–His-230 and His-254–Ser-255. His-262 contacts a divalent metal cation. Residues Asp-276–Gly-278, Thr-352–Glu-355, Phe-359, and Arg-362 contribute to the 4-CDP-2-C-methyl-D-erythritol 2-phosphate site.

It in the N-terminal section; belongs to the IspD/TarI cytidylyltransferase family. IspD subfamily. In the C-terminal section; belongs to the IspF family. A divalent metal cation serves as cofactor.

The catalysed reaction is 2-C-methyl-D-erythritol 4-phosphate + CTP + H(+) = 4-CDP-2-C-methyl-D-erythritol + diphosphate. The enzyme catalyses 4-CDP-2-C-methyl-D-erythritol 2-phosphate = 2-C-methyl-D-erythritol 2,4-cyclic diphosphate + CMP. The protein operates within isoprenoid biosynthesis; isopentenyl diphosphate biosynthesis via DXP pathway; isopentenyl diphosphate from 1-deoxy-D-xylulose 5-phosphate: step 2/6. Its pathway is isoprenoid biosynthesis; isopentenyl diphosphate biosynthesis via DXP pathway; isopentenyl diphosphate from 1-deoxy-D-xylulose 5-phosphate: step 4/6. Functionally, bifunctional enzyme that catalyzes the formation of 4-diphosphocytidyl-2-C-methyl-D-erythritol from CTP and 2-C-methyl-D-erythritol 4-phosphate (MEP) (IspD), and catalyzes the conversion of 4-diphosphocytidyl-2-C-methyl-D-erythritol 2-phosphate (CDP-ME2P) to 2-C-methyl-D-erythritol 2,4-cyclodiphosphate (ME-CPP) with a corresponding release of cytidine 5-monophosphate (CMP) (IspF). This is Bifunctional enzyme IspD/IspF from Hyphomonas neptunium (strain ATCC 15444).